The following is a 713-amino-acid chain: Ribosomal RNA large subunit methyltransferase K/L (713 aa).

Residues 43–154 (LAYRITLWTR…NGVITIAMNF (112 aa)) form the THUMP domain.

It belongs to the methyltransferase superfamily. RlmKL family.

The protein localises to the cytoplasm. The enzyme catalyses guanosine(2445) in 23S rRNA + S-adenosyl-L-methionine = N(2)-methylguanosine(2445) in 23S rRNA + S-adenosyl-L-homocysteine + H(+). It carries out the reaction guanosine(2069) in 23S rRNA + S-adenosyl-L-methionine = N(2)-methylguanosine(2069) in 23S rRNA + S-adenosyl-L-homocysteine + H(+). Functionally, specifically methylates the guanine in position 2445 (m2G2445) and the guanine in position 2069 (m7G2069) of 23S rRNA. The polypeptide is Ribosomal RNA large subunit methyltransferase K/L (Shewanella sp. (strain ANA-3)).